The following is a 93-amino-acid chain: Translation initiation factor IF-1 (93 aa).

The S1-like domain maps to 1–72 (MAKEELIQFE…EKGRLIFRHK (72 aa)). The segment at 69 to 93 (FRHKDERPSGAPRGGPPRGGQFRRR) is disordered.

Belongs to the IF-1 family. Component of the 30S ribosomal translation pre-initiation complex which assembles on the 30S ribosome in the order IF-2 and IF-3, IF-1 and N-formylmethionyl-tRNA(fMet); mRNA recruitment can occur at any time during PIC assembly.

Its subcellular location is the cytoplasm. In terms of biological role, one of the essential components for the initiation of protein synthesis. Stabilizes the binding of IF-2 and IF-3 on the 30S subunit to which N-formylmethionyl-tRNA(fMet) subsequently binds. Helps modulate mRNA selection, yielding the 30S pre-initiation complex (PIC). Upon addition of the 50S ribosomal subunit IF-1, IF-2 and IF-3 are released leaving the mature 70S translation initiation complex. In Nitrobacter hamburgensis (strain DSM 10229 / NCIMB 13809 / X14), this protein is Translation initiation factor IF-1.